Here is a 445-residue protein sequence, read N- to C-terminus: Tubulin beta-2 chain (445 aa).

Residues Gln12, Glu73, Ser142, Gly146, Thr147, Gly148, Asn208, and Asn230 each contribute to the GTP site. Glu73 contacts Mg(2+).

It belongs to the tubulin family. In terms of assembly, dimer of alpha and beta chains. A typical microtubule is a hollow water-filled tube with an outer diameter of 25 nm and an inner diameter of 15 nM. Alpha-beta heterodimers associate head-to-tail to form protofilaments running lengthwise along the microtubule wall with the beta-tubulin subunit facing the microtubule plus end conferring a structural polarity. Microtubules usually have 13 protofilaments but different protofilament numbers can be found in some organisms and specialized cells. Requires Mg(2+) as cofactor.

The protein resides in the cytoplasm. Its subcellular location is the cytoskeleton. Its function is as follows. Tubulin is the major constituent of microtubules, a cylinder consisting of laterally associated linear protofilaments composed of alpha- and beta-tubulin heterodimers. Microtubules grow by the addition of GTP-tubulin dimers to the microtubule end, where a stabilizing cap forms. Below the cap, tubulin dimers are in GDP-bound state, owing to GTPase activity of alpha-tubulin. In Suillus bovinus (Jersey cow bolete), this protein is Tubulin beta-2 chain (TUBB2).